We begin with the raw amino-acid sequence, 248 residues long: Phycocyanobilin:ferredoxin oxidoreductase (248 aa).

It belongs to the HY2 family.

The catalysed reaction is (2R,3Z)-phycocyanobilin + 4 oxidized [2Fe-2S]-[ferredoxin] = biliverdin IXalpha + 4 reduced [2Fe-2S]-[ferredoxin] + 4 H(+). In terms of biological role, catalyzes the four-electron reduction of biliverdin IX-alpha (2-electron reduction at both the A and D rings); the reaction proceeds via an isolatable 2-electron intermediate, 181,182-dihydrobiliverdin. The chain is Phycocyanobilin:ferredoxin oxidoreductase (pcyA) from Synechococcus elongatus (strain ATCC 33912 / PCC 7942 / FACHB-805) (Anacystis nidulans R2).